The sequence spans 225 residues: Urease accessory protein UreG (225 aa).

Residue 25 to 32 (GPVGAGKT) coordinates GTP.

The protein belongs to the SIMIBI class G3E GTPase family. UreG subfamily. Homodimer. UreD, UreF and UreG form a complex that acts as a GTP-hydrolysis-dependent molecular chaperone, activating the urease apoprotein by helping to assemble the nickel containing metallocenter of UreC. The UreE protein probably delivers the nickel.

Its subcellular location is the cytoplasm. In terms of biological role, facilitates the functional incorporation of the urease nickel metallocenter. This process requires GTP hydrolysis, probably effectuated by UreG. The polypeptide is Urease accessory protein UreG (Haemophilus influenzae (strain 86-028NP)).